The following is a 164-amino-acid chain: MGFKTKMQNLFLGNTDDLDELEYENDATINKGRGASQQEYDEYYEDSTPTVTQKEDPVRQSNIVPIHTKKAKSQVILSEPRVFNEAQEIGEHLRQNRAVIVNMQRMSKDQSRQMINFLSGVVFALDGTITTISQNTLLCVPNNVELAGSISNLLGEDDINHKGW.

The tract at residues 29–57 (INKGRGASQQEYDEYYEDSTPTVTQKEDP) is disordered.

It belongs to the SepF family. In terms of assembly, homodimer. Interacts with FtsZ.

It localises to the cytoplasm. Functionally, cell division protein that is part of the divisome complex and is recruited early to the Z-ring. Probably stimulates Z-ring formation, perhaps through the cross-linking of FtsZ protofilaments. Its function overlaps with FtsA. The sequence is that of Cell division protein SepF from Exiguobacterium sibiricum (strain DSM 17290 / CCUG 55495 / CIP 109462 / JCM 13490 / 255-15).